Reading from the N-terminus, the 921-residue chain is Sodium/calcium exchanger 2 (921 aa).

Residues 1-20 (MAPLALVGVALLLGAPHCLG) form the signal peptide. At 21-68 (EATPTPSLPPPPANDSDASPGGCQGSYRCQPGVLLPVWEPDDPSLGDK) the chain is on the extracellular side. The segment at 23 to 42 (TPTPSLPPPPANDSDASPGG) is disordered. Asn-34 carries an N-linked (GlcNAc...) asparagine glycan. Residues 69–90 (AARAVVYFVAMVYMFLGLSIIA) traverse the membrane as a helical segment. The Cytoplasmic segment spans residues 91-130 (DRFMASIEVITSKEKEITITKANGETSVGTVRIWNETVSN). Residues 131–152 (LTLMALGSSAPEILLSVIEVCG) form a helical membrane-spanning segment. The Alpha-1 repeat unit spans residues 135–175 (ALGSSAPEILLSVIEVCGHNFQAGELGPGTIVGSAAFNMFV). The Extracellular segment spans residues 153–164 (HNFQAGELGPGT). A helical transmembrane segment spans residues 165-185 (IVGSAAFNMFVVIAVCVYVIP). The Cytoplasmic segment spans residues 186-196 (AGESRKIKHLR). A helical transmembrane segment spans residues 197–219 (VFFVTASWSIFAYVWLYLILAVF). The Extracellular portion of the chain corresponds to 220–222 (SPG). A helical membrane pass occupies residues 223 to 246 (VVQVWEALLTLVFFPVCVVFAWMA). The Cytoplasmic portion of the chain corresponds to 247-720 (DKRLLFYKYV…DGSREERLPS (474 aa)). The putative calmodulin-binding region stretch occupies residues 248–267 (KRLLFYKYVYKRYRTDPRSG). Residues 372 to 391 (AADAARRPGANDGAPDDEDD) form a disordered region. Calx-beta domains are found at residues 384–483 (GAPD…VRLL) and 512–612 (ATVT…IELG). 14 residues coordinate Ca(2+): Glu-407, Asp-443, Asp-468, Asp-469, Ile-471, Glu-473, Glu-476, Asp-518, Asp-519, Asp-520, Glu-536, Asp-598, Glu-599, and Glu-600. Ser-622 bears the Phosphoserine mark. Glu-665 lines the Ca(2+) pocket. A helical transmembrane segment spans residues 721–740 (CFDYVMHFLTVFWKVLFACL). Residues 741–747 (PPTEYCH) are Extracellular-facing. A helical transmembrane segment spans residues 748–770 (GWACFGVCILVIGLLTALIGDLA). Residues 771–772 (SH) lie on the Cytoplasmic side of the membrane. Residues 773-791 (FGCTVGLKDSVNAVVFVAL) form a helical membrane-spanning segment. An Alpha-2 repeat occupies 790–826 (ALGTSIPDTFASKVAALQDQCADASIGNVTGSNAVNV). Residues 792–822 (GTSIPDTFASKVAALQDQCADASIGNVTGSN) lie on the Extracellular side of the membrane. Asn-817 carries N-linked (GlcNAc...) asparagine glycosylation. The helical transmembrane segment at 823-843 (AVNVFLGLGVAWSVAAVYWAV) threads the bilayer. The Cytoplasmic portion of the chain corresponds to 844–854 (QGRPFEVRTGT). A helical membrane pass occupies residues 855-875 (LAFSVTLFTVFAFVGIAVLLY). Over 876–892 (RRRPHIGGELGGPRGPK) the chain is Extracellular. A helical transmembrane segment spans residues 893 to 909 (LATTALFLGLWFLYILF). Topologically, residues 910–921 (ASLEAYCHIRGF) are cytoplasmic.

The protein belongs to the Ca(2+):cation antiporter (CaCA) (TC 2.A.19) family. SLC8 subfamily. In terms of tissue distribution, detected in neocortex and hippocampus on pyramidal cells, astrocyte processes and dendrites (at protein level). Brain and skeletal muscle.

Its subcellular location is the cell membrane. The protein localises to the basolateral cell membrane. The protein resides in the perikaryon. It is found in the cell projection. It localises to the dendrite. Its subcellular location is the dendritic spine. The enzyme catalyses Ca(2+)(in) + 3 Na(+)(out) = Ca(2+)(out) + 3 Na(+)(in). Its activity is regulated as follows. Calcium transport is down-regulated by Na(+) and stimulated by Ca(2+). Its function is as follows. Mediates the electrogenic exchange of Ca(2+) against Na(+) ions across the cell membrane, and thereby contributes to the regulation of cytoplasmic Ca(2+) levels and Ca(2+)-dependent cellular processes. Contributes to cellular Ca(2+) homeostasis in excitable cells. Contributes to the rapid decrease of cytoplasmic Ca(2+) levels back to baseline after neuronal activation, and thereby contributes to modulate synaptic plasticity, learning and memory. Plays a role in regulating urinary Ca(2+) and Na(+) excretion. This chain is Sodium/calcium exchanger 2 (Slc8a2), found in Rattus norvegicus (Rat).